A 444-amino-acid chain; its full sequence is Tubulin beta-2 chain (444 aa).

Residues Gln-11, Glu-69, Ser-138, Gly-142, Thr-143, Gly-144, Asn-204, and Asn-226 each coordinate GTP. Glu-69 is a binding site for Mg(2+). Residues 422 to 444 (YQQYQDATAEEDDYDDGEGSTGD) are disordered. Over residues 429 to 444 (TAEEDDYDDGEGSTGD) the composition is skewed to acidic residues.

Belongs to the tubulin family. In terms of assembly, dimer of alpha and beta chains. A typical microtubule is a hollow water-filled tube with an outer diameter of 25 nm and an inner diameter of 15 nM. Alpha-beta heterodimers associate head-to-tail to form protofilaments running lengthwise along the microtubule wall with the beta-tubulin subunit facing the microtubule plus end conferring a structural polarity. Microtubules usually have 13 protofilaments but different protofilament numbers can be found in some organisms and specialized cells. Mg(2+) serves as cofactor. Found in areas of rapidly dividing tissues.

Its subcellular location is the cytoplasm. It localises to the cytoskeleton. Functionally, tubulin is the major constituent of microtubules, a cylinder consisting of laterally associated linear protofilaments composed of alpha- and beta-tubulin heterodimers. Microtubules grow by the addition of GTP-tubulin dimers to the microtubule end, where a stabilizing cap forms. Below the cap, tubulin dimers are in GDP-bound state, owing to GTPase activity of alpha-tubulin. This is Tubulin beta-2 chain (TUBB2) from Daucus carota (Wild carrot).